We begin with the raw amino-acid sequence, 78 residues long: Omega-conotoxin-like ArMKLT1-011 (78 aa).

A signal peptide spans 1-22; it reads MKLTCMMIVAVLFLTAWTSVTA. A propeptide spanning residues 23–48 is cleaved from the precursor; it reads VNTRGELENLFLRASHEMNSEASKLD. Intrachain disulfides connect C52-C69, C59-C73, and C68-C77.

It belongs to the conotoxin O1 superfamily. Expressed by the venom duct.

The protein resides in the secreted. Its function is as follows. Omega-conotoxins act at presynaptic membranes, they bind and block voltage-gated calcium channels (Cav). This Conus arenatus (Sand-dusted cone) protein is Omega-conotoxin-like ArMKLT1-011.